Consider the following 120-residue polypeptide: Dihydroneopterin aldolase (120 aa).

Residues Glu21, Tyr53, and 72–73 (VE) each bind substrate. The active-site Proton donor/acceptor is Lys99.

It belongs to the DHNA family.

It catalyses the reaction 7,8-dihydroneopterin = 6-hydroxymethyl-7,8-dihydropterin + glycolaldehyde. It functions in the pathway cofactor biosynthesis; tetrahydrofolate biosynthesis; 2-amino-4-hydroxy-6-hydroxymethyl-7,8-dihydropteridine diphosphate from 7,8-dihydroneopterin triphosphate: step 3/4. Its function is as follows. Catalyzes the conversion of 7,8-dihydroneopterin to 6-hydroxymethyl-7,8-dihydropterin. The polypeptide is Dihydroneopterin aldolase (folB) (Bacillus subtilis (strain 168)).